A 2178-amino-acid polypeptide reads, in one-letter code: Toxin A (2178 aa).

The interval M1–S93 is four-helical bundle. Residues K98–F474 form the GT44 domain. Residues K98–F474 are glucosyltransferase region. Residues K98 to F474 are N-acetylglucosaminyltransferase region. UDP-N-acetyl-alpha-D-glucosamine is bound by residues I103 to I105, N141, S267 to R271, and D284 to D286. 3 residues coordinate Mg(2+): D284, D286, and E520. S523–W525 lines the UDP-N-acetyl-alpha-D-glucosamine pocket. The tract at residues N549–E806 is autoprocessing region. Positions 557, 607, and 651 each coordinate 1D-myo-inositol hexakisphosphate. The region spanning V574–W787 is the Peptidase C80 domain. The For protease activity role is filled by H657. Residue C707 is the Nucleophile; for protease activity of the active site. Residues K758–R759 and K782 contribute to the 1D-myo-inositol hexakisphosphate site. The interval F807–N1485 is translocation region. Cell wall-binding repeat units follow at residues E1799–I1818, K1820–V1839, Y1870–A1889, V1890–M1909, Q1910–E1929, I1931–L1950, L1951–G1970, Y2004–A2023, V2024–V2043, T2045–N2060, V2064–I2083, Y2114–A2133, V2134–A2153, and T2155–Q2174.

The protein belongs to the clostridial glucosylating toxin (LCGT) family. Mn(2+) is required as a cofactor. Requires Mg(2+) as cofactor. In terms of processing, undergoes autocatalytic cleavage to release the N-terminal part (N-acetylglucosaminyltransferase TcdA), which constitutes the active part of the toxin, in the host cytosol. 1D-myo-inositol hexakisphosphate-binding (InsP6) activates the peptidase C80 domain and promotes autoprocessing.

The protein localises to the secreted. It localises to the host endosome membrane. It is found in the host cytoplasm. The protein resides in the host cytosol. Its subcellular location is the host cell membrane. It catalyses the reaction L-threonyl-[protein] + UDP-N-acetyl-alpha-D-glucosamine = 3-O-(N-acetyl-alpha-D-glucosaminyl)-L-threonyl-[protein] + UDP + H(+). Protease activity is activated upon binding to 1D-myo-inositol hexakisphosphate (InsP6), which induces conformational reorganization. Its function is as follows. Precursor of a cytotoxin, which enters into host cells and mediates autoprocessing to release the active toxin (N-acetylglucosaminyltransferase TcdA) into the host cytosol. Once entered into host cells, acidification in the endosome promotes the membrane insertion of the translocation region and formation of a pore, leading to translocation of the GT44 and peptidase C80 domains across the endosomal membrane. This activates the peptidase C80 domain and autocatalytic processing, releasing the N-terminal part (N-acetylglucosaminyltransferase TcdA), which constitutes the active part of the toxin, in the cytosol. Functionally, active form of the toxin, which is released into the host cytosol following autoprocessing and inactivates small GTPases. Acts by mediating monoglycosylation of small GTPases of the Rho family (Rac1, RhoA, RhoG and Cdc42) in host cells at the conserved threonine residue located in the switch I region ('Thr-37/35'), using UDP-N-acetyl-alpha-D-glucosamine as the sugar donor. Monoglycosylation of host small GTPases completely prevents the recognition of the downstream effector, blocking the GTPases in their inactive form, leading to actin cytoskeleton disruption and cell death. The chain is Toxin A (tcdA) from Clostridium novyi.